Reading from the N-terminus, the 370-residue chain is 3-isopropylmalate dehydrogenase (370 aa).

77–90 is an NAD(+) binding site; that stretch reads GPKWDGVPYDARPE. Substrate-binding residues include Arg97, Arg107, Arg135, and Asp226. Mg(2+) is bound by residues Asp226, Asp250, and Asp254. 290-302 serves as a coordination point for NAD(+); the sequence is GSAPDIAGKGMAN.

The protein belongs to the isocitrate and isopropylmalate dehydrogenases family. LeuB type 1 subfamily. In terms of assembly, homodimer. The cofactor is Mg(2+). Mn(2+) serves as cofactor.

Its subcellular location is the cytoplasm. It catalyses the reaction (2R,3S)-3-isopropylmalate + NAD(+) = 4-methyl-2-oxopentanoate + CO2 + NADH. It functions in the pathway amino-acid biosynthesis; L-leucine biosynthesis; L-leucine from 3-methyl-2-oxobutanoate: step 3/4. Functionally, catalyzes the oxidation of 3-carboxy-2-hydroxy-4-methylpentanoate (3-isopropylmalate) to 3-carboxy-4-methyl-2-oxopentanoate. The product decarboxylates to 4-methyl-2 oxopentanoate. This chain is 3-isopropylmalate dehydrogenase, found in Rhodopseudomonas palustris (strain ATCC BAA-98 / CGA009).